The primary structure comprises 199 residues: NAD(P)H dehydrogenase (quinone) (199 aa).

The region spanning 4–190 (VLVLYYSSYG…TGARYQGRKI (187 aa)) is the Flavodoxin-like domain. Residues 10–15 (SSYGHL) and 78–80 (TRF) contribute to the FMN site. An NAD(+)-binding site is contributed by tyrosine 12. Tryptophan 98 contacts substrate. FMN is bound by residues 113–119 (STATQHG) and histidine 134.

The protein belongs to the WrbA family. It depends on FMN as a cofactor.

It catalyses the reaction a quinone + NADH + H(+) = a quinol + NAD(+). The enzyme catalyses a quinone + NADPH + H(+) = a quinol + NADP(+). The chain is NAD(P)H dehydrogenase (quinone) from Caulobacter vibrioides (strain ATCC 19089 / CIP 103742 / CB 15) (Caulobacter crescentus).